A 154-amino-acid polypeptide reads, in one-letter code: Transcriptional repressor NrdR (154 aa).

A zinc finger lies at 3-34 (CPYCRHPDSRVVDSREADDGQLIRRRRSCPEC). In terms of domain architecture, ATP-cone spans 46–136 (LAVVKRSGVT…VYRSFESLAD (91 aa)).

It belongs to the NrdR family. It depends on Zn(2+) as a cofactor.

Functionally, negatively regulates transcription of bacterial ribonucleotide reductase nrd genes and operons by binding to NrdR-boxes. In Salinispora tropica (strain ATCC BAA-916 / DSM 44818 / JCM 13857 / NBRC 105044 / CNB-440), this protein is Transcriptional repressor NrdR.